A 659-amino-acid chain; its full sequence is Interferon-induced GTP-binding protein Mx3 (659 aa).

Residues 65–338 form the Dynamin-type G domain; it reads DLALPAIAVI…LISHICKSLP (274 aa). Positions 75 to 82 are G1 motif; sequence GDQSSGKS. GTP is bound at residue 75 to 82; it reads GDQSSGKS. Residues 100–102 form a G2 motif region; sequence VTR. Residues 176–179 are G3 motif; the sequence is DLPG. Residues 176 to 180 and 245 to 248 each bind GTP; these read DLPGI and TKPD. Residues 245–248 form a G4 motif region; that stretch reads TKPD. The segment at 277–280 is G5 motif; the sequence is KCRG. Positions 547 to 568 are disordered; that stretch reads EAEEEERKHGKSRSAQSPNLQT. A compositionally biased stretch (polar residues) spans 559-568; sequence RSAQSPNLQT. In terms of domain architecture, GED spans 571–659; that stretch reads MDEIFQHLNA…AQRRLAKFPG (89 aa).

Belongs to the TRAFAC class dynamin-like GTPase superfamily. Dynamin/Fzo/YdjA family.

Its subcellular location is the cytoplasm. Its function is as follows. Does not show activity against influenza virus or VSV; although it only differs from Mx2 by 8 positions. This chain is Interferon-induced GTP-binding protein Mx3 (Mx3), found in Rattus norvegicus (Rat).